Reading from the N-terminus, the 98-residue chain is NADH-ubiquinone oxidoreductase chain 4L (98 aa).

The next 3 helical transmembrane spans lie at 1-21 (MASI…GVLI), 28-48 (STLL…TLLI), and 61-81 (LILL…LVTI).

The protein belongs to the complex I subunit 4L family. Core subunit of respiratory chain NADH dehydrogenase (Complex I) which is composed of 45 different subunits.

It localises to the mitochondrion inner membrane. It carries out the reaction a ubiquinone + NADH + 5 H(+)(in) = a ubiquinol + NAD(+) + 4 H(+)(out). In terms of biological role, core subunit of the mitochondrial membrane respiratory chain NADH dehydrogenase (Complex I) which catalyzes electron transfer from NADH through the respiratory chain, using ubiquinone as an electron acceptor. Part of the enzyme membrane arm which is embedded in the lipid bilayer and involved in proton translocation. The chain is NADH-ubiquinone oxidoreductase chain 4L (MT-ND4L) from Thylamys elegans (Elegant fat-tailed mouse opossum).